Reading from the N-terminus, the 340-residue chain is Hyaluronan and proteoglycan link protein 2 (340 aa).

The N-terminal stretch at 1-26 (MPGWLTLPTLCRFLLWAFTIFHKAQG) is a signal peptide. In terms of domain architecture, Ig-like V-type spans 34–144 (PHYLLPPIHE…EDESVALTLS (111 aa)). Cystine bridges form between C57–C128, C170–C240, C194–C215, C265–C336, and C290–C311. 2 consecutive Link domains span residues 148-242 (VVFP…FCFT) and 245-338 (LAGQ…YCYA).

Belongs to the HAPLN family. As to expression, expressed only in adult brain.

It is found in the secreted. It localises to the extracellular space. The protein resides in the extracellular matrix. Its function is as follows. Mediates a firm binding of versican V2 to hyaluronic acid. May play a pivotal role in the formation of the hyaluronan-associated matrix in the central nervous system (CNS) which facilitates neuronal conduction and general structural stabilization. Binds to hyaluronic acid. This Homo sapiens (Human) protein is Hyaluronan and proteoglycan link protein 2 (HAPLN2).